Consider the following 128-residue polypeptide: Fluoride-specific ion channel FluC (128 aa).

The next 4 membrane-spanning stretches (helical) occupy residues 5-25 (IVAI…LSIG), 35-55 (LGTL…VVAF), 67-87 (LFVI…SVEV), and 96-116 (FGWA…LTGL). Residues Gly-75 and Thr-78 each contribute to the Na(+) site.

This sequence belongs to the fluoride channel Fluc/FEX (TC 1.A.43) family.

It localises to the cell inner membrane. The catalysed reaction is fluoride(in) = fluoride(out). With respect to regulation, na(+) is not transported, but it plays an essential structural role and its presence is essential for fluoride channel function. Fluoride-specific ion channel. Important for reducing fluoride concentration in the cell, thus reducing its toxicity. This chain is Fluoride-specific ion channel FluC, found in Burkholderia thailandensis (strain ATCC 700388 / DSM 13276 / CCUG 48851 / CIP 106301 / E264).